We begin with the raw amino-acid sequence, 665 residues long: Probable protein transport Sec1a (665 aa).

The segment at 543 to 594 is disordered; that stretch reads PSPSFRGIPSASTQTSPAHQPAQSMRSRRTGGTWARPRDSDDGYSSDSVLKH. Composition is skewed to polar residues over residues 552–567 and 585–594; these read SASTQTSPAHQPAQSM and GYSSDSVLKH.

Belongs to the STXBP/unc-18/SEC1 family.

In terms of biological role, involved in the vesicle trafficking. Binds syntaxins. The chain is Probable protein transport Sec1a from Oryza sativa subsp. japonica (Rice).